Consider the following 559-residue polypeptide: Nuclear speckle splicing regulatory protein 1 (559 aa).

Residues 22 to 57 (VLQKPSVFGNDSDDDDDETSVSESLQREAAKKQAMK) are disordered. 2 positions are modified to phosphoserine: Ser27 and Ser33. Positions 32-41 (DSDDDDDETS) are enriched in acidic residues. Positions 105–179 (IHNLLKAVEI…EARLDVTKQR (75 aa)) form a coiled coil. The segment at 107 to 171 (NLLKAVEIRK…RERRAAALEA (65 aa)) is necessary for alternative splicing activity. Positions 195–534 (EEEVPTCSFR…AKRSNEETVT (340 aa)) are disordered. Residues 204–219 (REARSEIKEEKSKGYS) are compositionally biased toward basic and acidic residues. A Glycyl lysine isopeptide (Lys-Gly) (interchain with G-Cter in SUMO2) cross-link involves residue Lys211. Phosphoserine is present on residues Ser249, Ser255, and Ser256. Basic and acidic residues predominate over residues 251–274 (FDAKSSENDEMEGDKGNCRREKGT). Position 276 is a phosphothreonine (Thr276). Lys282 participates in a covalent cross-link: Glycyl lysine isopeptide (Lys-Gly) (interchain with G-Cter in SUMO2). Basic and acidic residues-rich tracts occupy residues 314–343 (EKRE…EKRD), 351–488 (SHRD…RNPE), and 502–521 (RITE…HETV). Residues 379 to 428 (KREKDREKYPSREQERHRQRNNYDRHNEKGCEKEEKSKEKEEHVKARKER) adopt a coiled-coil conformation. Position 458 is a phosphoserine (Ser458).

The protein belongs to the NSRP1 family. Interacts (via C-terminus) with SRSF1. Interacts (via C-terminus) with SRSF2.

The protein localises to the nucleus. The protein resides in the nucleus speckle. In terms of biological role, RNA-binding protein that mediates pre-mRNA alternative splicing regulation. This Bos taurus (Bovine) protein is Nuclear speckle splicing regulatory protein 1 (NSRP1).